Reading from the N-terminus, the 70-residue chain is Homeobox protein OTX2 (70 aa).

The disordered stretch occupies residues histidine 34–serine 70. Polar residues predominate over residues proline 45–serine 70.

Belongs to the paired homeobox family. Bicoid subfamily.

The protein resides in the nucleus. Functionally, transcription factor probably involved in the development of the brain and the sense organs. Can bind to the bicoid/BCD target sequence (BTS): 5'-TCTAATCCC-3'. This chain is Homeobox protein OTX2 (Otx2), found in Rattus norvegicus (Rat).